The following is a 141-amino-acid chain: Nucleoside diphosphate kinase (141 aa).

6 residues coordinate ATP: K11, F59, R87, T93, R104, and N114. H117 acts as the Pros-phosphohistidine intermediate in catalysis.

It belongs to the NDK family. Homotetramer. Mg(2+) is required as a cofactor.

Its subcellular location is the cytoplasm. It carries out the reaction a 2'-deoxyribonucleoside 5'-diphosphate + ATP = a 2'-deoxyribonucleoside 5'-triphosphate + ADP. The enzyme catalyses a ribonucleoside 5'-diphosphate + ATP = a ribonucleoside 5'-triphosphate + ADP. In terms of biological role, major role in the synthesis of nucleoside triphosphates other than ATP. The ATP gamma phosphate is transferred to the NDP beta phosphate via a ping-pong mechanism, using a phosphorylated active-site intermediate. The chain is Nucleoside diphosphate kinase from Nitrosomonas eutropha (strain DSM 101675 / C91 / Nm57).